A 170-amino-acid chain; its full sequence is Acetyl-CoA decarbonylase/synthase complex subunit epsilon 2 (170 aa).

Belongs to the CdhB family. As to quaternary structure, heterotetramer of two alpha and two epsilon subunits. The ACDS complex is made up of alpha, epsilon, beta, gamma and delta subunits with a probable stoichiometry of (alpha(2)epsilon(2))(4)-beta(8)-(gamma(1)delta(1))(8).

The protein operates within one-carbon metabolism; methanogenesis from acetate. In terms of biological role, part of a complex that catalyzes the reversible cleavage of acetyl-CoA, allowing growth on acetate as sole source of carbon and energy. The alpha-epsilon subcomponent functions as a carbon monoxide dehydrogenase. The precise role of the epsilon subunit is unclear; it may have a stabilizing role within the alpha(2)epsilon(2) component and/or be involved in electron transfer to FAD during a potential FAD-mediated CO oxidation. The polypeptide is Acetyl-CoA decarbonylase/synthase complex subunit epsilon 2 (cdhB2) (Methanosarcina acetivorans (strain ATCC 35395 / DSM 2834 / JCM 12185 / C2A)).